We begin with the raw amino-acid sequence, 291 residues long: MNAYLSDQPVRLSPLRDEQGNQPRFGLLLEPGRPGMHVGELPAQWLKGLARSHHLLLLRGFAAFADAESLTRYCHDFGEVMLWPFGAVLELVEQEGAEDHIFANNYVPLHWDGMYLETVPEFQVFHCVDAPGDSDGGRTTFSSTPAALQLADSSELELWRRASGRYQRSAAHYSSRSAAPIVERHPRREFPILRFCEPPVEGDASFINPSEFHYDGIAPEQRGELLASLRRCLYHPQAHYAHRWRSDDLVIADNLTLLHGREAFAHRAPRHLRRVHIHAEPALRNPHLQRD.

Fe cation contacts are provided by H110, D112, and H259.

Belongs to the TfdA dioxygenase family. As to quaternary structure, homotrimer in solution. Fe(2+) serves as cofactor.

The enzyme catalyses (2S)-3-(4-hydroxyphenyl)-2-isocyanopropanoate + 2-oxoglutarate + O2 = (2E)-3-(4-hydroxyphenyl)-2-isocyanoprop-2-enoate + succinate + CO2 + H2O. Functionally, involved in the biosynthesis of paerucumarin, a cyclized isocyano derivative of tyrosine. Catalyzes the 2-oxoglutarate-dependent oxidation of tyrosine isonitrile. This is Tyrosine isonitrile desaturase from Pseudomonas aeruginosa (strain ATCC 15692 / DSM 22644 / CIP 104116 / JCM 14847 / LMG 12228 / 1C / PRS 101 / PAO1).